The following is a 90-amino-acid chain: Putative regulatory protein NT01CX_2250 (90 aa).

This sequence belongs to the RemA family.

The protein is Putative regulatory protein NT01CX_2250 of Clostridium novyi (strain NT).